The sequence spans 175 residues: CEN-like protein 4 (175 aa).

Belongs to the phosphatidylethanolamine-binding protein family. As to expression, expressed in vegetative axillary meristems but not in the main shoot meristem.

Its subcellular location is the cytoplasm. In terms of biological role, may form complexes with phosphorylated ligands by interfering with kinases and their effectors. The polypeptide is CEN-like protein 4 (CET4) (Nicotiana tabacum (Common tobacco)).